The sequence spans 301 residues: Quinolinate synthase (301 aa).

2 residues coordinate iminosuccinate: His-21 and Ser-38. Position 83 (Cys-83) interacts with [4Fe-4S] cluster. Iminosuccinate is bound by residues 109-111 (YIN) and Ser-126. Cys-169 contacts [4Fe-4S] cluster. Residues 195 to 197 (HPE) and Thr-212 contribute to the iminosuccinate site. Cys-257 lines the [4Fe-4S] cluster pocket.

Belongs to the quinolinate synthase family. Type 2 subfamily. The cofactor is [4Fe-4S] cluster.

It is found in the cytoplasm. The enzyme catalyses iminosuccinate + dihydroxyacetone phosphate = quinolinate + phosphate + 2 H2O + H(+). Its pathway is cofactor biosynthesis; NAD(+) biosynthesis; quinolinate from iminoaspartate: step 1/1. In terms of biological role, catalyzes the condensation of iminoaspartate with dihydroxyacetone phosphate to form quinolinate. In Clostridium perfringens (strain 13 / Type A), this protein is Quinolinate synthase.